Reading from the N-terminus, the 120-residue chain is UPF0145 protein UNCMA_30400 (120 aa).

The protein belongs to the UPF0145 family.

This is UPF0145 protein UNCMA_30400 from Methanocella arvoryzae (strain DSM 22066 / NBRC 105507 / MRE50).